Here is a 243-residue protein sequence, read N- to C-terminus: 1-(5-phosphoribosyl)-5-[(5-phosphoribosylamino)methylideneamino] imidazole-4-carboxamide isomerase (243 aa).

The Proton acceptor role is filled by aspartate 8. Aspartate 130 acts as the Proton donor in catalysis.

Belongs to the HisA/HisF family.

The protein resides in the cytoplasm. The catalysed reaction is 1-(5-phospho-beta-D-ribosyl)-5-[(5-phospho-beta-D-ribosylamino)methylideneamino]imidazole-4-carboxamide = 5-[(5-phospho-1-deoxy-D-ribulos-1-ylimino)methylamino]-1-(5-phospho-beta-D-ribosyl)imidazole-4-carboxamide. Its pathway is amino-acid biosynthesis; L-histidine biosynthesis; L-histidine from 5-phospho-alpha-D-ribose 1-diphosphate: step 4/9. The chain is 1-(5-phosphoribosyl)-5-[(5-phosphoribosylamino)methylideneamino] imidazole-4-carboxamide isomerase from Acinetobacter baylyi (strain ATCC 33305 / BD413 / ADP1).